Here is a 424-residue protein sequence, read N- to C-terminus: Glutamyl-tRNA reductase (424 aa).

Residues T50–R53, S98, E103–Q105, and Q109 each bind substrate. C51 functions as the Nucleophile in the catalytic mechanism. G178–G183 provides a ligand contact to NADP(+).

The protein belongs to the glutamyl-tRNA reductase family. As to quaternary structure, homodimer.

It carries out the reaction (S)-4-amino-5-oxopentanoate + tRNA(Glu) + NADP(+) = L-glutamyl-tRNA(Glu) + NADPH + H(+). Its pathway is porphyrin-containing compound metabolism; protoporphyrin-IX biosynthesis; 5-aminolevulinate from L-glutamyl-tRNA(Glu): step 1/2. Catalyzes the NADPH-dependent reduction of glutamyl-tRNA(Glu) to glutamate 1-semialdehyde (GSA). The chain is Glutamyl-tRNA reductase from Methanoregula boonei (strain DSM 21154 / JCM 14090 / 6A8).